A 707-amino-acid chain; its full sequence is MAP kinase-interacting serine/threonine-protein kinase mnk-1 (707 aa).

Positions 1 to 24 are enriched in polar residues; it reads MFFLDNTDSMTSSSRGITMPNTIS. 2 disordered regions span residues 1-29 and 101-131; these read MFFLDNTDSMTSSSRGITMPNTISSHEDV and RQRERETYEDEDVLSSSDESSGRPIPRYVGR. A Protein kinase domain is found at 203–493; the sequence is KLTDEHLGSG…ADQILSHRWL (291 aa). ATP-binding positions include 209-217 and Lys-232; that span reads LGSGAYGSV. Catalysis depends on Asp-325, which acts as the Proton acceptor. 2 disordered regions span residues 589 to 628 and 688 to 707; these read RSGEFTPPISRASPTTPPPSMLNLSEDLTDSPVKRRSADD and FEDEQENANPIHRIETQVNV.

This sequence belongs to the protein kinase superfamily. CAMK Ser/Thr protein kinase family. Mg(2+) is required as a cofactor. In terms of tissue distribution, expressed in pharynx, intestine, vulva and body wall muscles.

It is found in the nucleus. It localises to the cytoplasm. The enzyme catalyses L-seryl-[protein] + ATP = O-phospho-L-seryl-[protein] + ADP + H(+). It carries out the reaction L-threonyl-[protein] + ATP = O-phospho-L-threonyl-[protein] + ADP + H(+). In terms of biological role, serine/threonine-protein kinase which is required in the germline to positively regulate lifespan. May play a role in body wall muscle contraction. May be involved in embryonic cytokinesis. The chain is MAP kinase-interacting serine/threonine-protein kinase mnk-1 from Caenorhabditis elegans.